Reading from the N-terminus, the 75-residue chain is Small ribosomal subunit protein bS16c (75 aa).

Belongs to the bacterial ribosomal protein bS16 family.

Its subcellular location is the plastid. It is found in the chloroplast. This chain is Small ribosomal subunit protein bS16c, found in Cyanidioschyzon merolae (strain NIES-3377 / 10D) (Unicellular red alga).